The primary structure comprises 145 residues: MFGIFSKGEPVSMEGELVQPSSIVINDYEEELHLPLSYWDIKDYKNSWLKSLGEGLSNKTHSALAVSMYEPEKTNFIFTWVLYFEDEKVYVQNNVIFLEECHGFSPENINKFIESRTTHDGDGMKISEWHTDLNSVLDFYHSLNN.

In terms of assembly, interacts with cognate toxin fragment CdiA-CT.

Its function is as follows. Immunity protein component of a toxin-immunity protein module, which functions as a cellular contact-dependent growth inhibition (CDI) system. CDI modules allow bacteria to communicate with and inhibit the growth of closely related neighboring bacteria in a contact-dependent fashion. Protects cells against the 16S rRNase activity of CdiA-CT, its cognate toxin protein, but not against the toxic effects of a similar rRNase, non-cognate CdiA-CT from E.chrysanthemi strain EC16. This chain is Immunity protein CdiI, found in Enterobacter cloacae subsp. cloacae (strain ATCC 13047 / DSM 30054 / NBRC 13535 / NCTC 10005 / WDCM 00083 / NCDC 279-56).